The sequence spans 428 residues: Pyruvate dehydrogenase E1 component subunit alpha-3, chloroplastic (428 aa).

A chloroplast-targeting transit peptide spans 1 to 61; it reads MATAFAPTKL…NATRRSPVVS (61 aa). Positions 115, 141, 142, 190, 192, 227, 228, and 256 each coordinate pyruvate. The thiamine diphosphate site is built by Y141, R142, A190, I192, D227, G228, N256, and H325. D227 provides a ligand contact to Mg(2+). N256 lines the Mg(2+) pocket.

Tetramer of 2 alpha and 2 beta subunits. The cofactor is thiamine diphosphate. Mg(2+) serves as cofactor.

The protein localises to the plastid. The protein resides in the chloroplast. The enzyme catalyses N(6)-[(R)-lipoyl]-L-lysyl-[protein] + pyruvate + H(+) = N(6)-[(R)-S(8)-acetyldihydrolipoyl]-L-lysyl-[protein] + CO2. Functionally, the pyruvate dehydrogenase complex catalyzes the overall conversion of pyruvate to acetyl-CoA and CO(2). It contains multiple copies of three enzymatic components: pyruvate dehydrogenase (E1), dihydrolipoamide acetyltransferase (E2) and lipoamide dehydrogenase (E3). This chain is Pyruvate dehydrogenase E1 component subunit alpha-3, chloroplastic (PDH-E1 ALPHA), found in Arabidopsis thaliana (Mouse-ear cress).